The sequence spans 224 residues: Putative O-methyltransferase MT1258 (224 aa).

The segment covering 1-10 (MDGTPGHDDM) has biased composition (basic and acidic residues). Residues 1–21 (MDGTPGHDDMPGQPAPSRGES) are disordered. Residues valine 51, glutamate 73, 75-76 (GT), serine 81, aspartate 99, and isoleucine 100 each bind S-adenosyl-L-methionine. Aspartate 147 is a binding site for substrate. Aspartate 149 is an S-adenosyl-L-methionine binding site.

This sequence belongs to the class I-like SAM-binding methyltransferase superfamily. Cation-dependent O-methyltransferase family.

The polypeptide is Putative O-methyltransferase MT1258 (Mycobacterium tuberculosis (strain CDC 1551 / Oshkosh)).